Consider the following 190-residue polypeptide: Somatotropin (190 aa).

H19 contributes to the Zn(2+) binding site. Residues C52 and C163 are joined by a disulfide bond. A Phosphoserine modification is found at S105. E172 contacts Zn(2+). The cysteines at positions 180 and 188 are disulfide-linked.

It belongs to the somatotropin/prolactin family.

The protein resides in the secreted. Plays an important role in growth control. Its major role in stimulating body growth is to stimulate the liver and other tissues to secrete IGF1. It stimulates both the differentiation and proliferation of myoblasts. It also stimulates amino acid uptake and protein synthesis in muscle and other tissues. The polypeptide is Somatotropin (GH1) (Vulpes vulpes (Red fox)).